The sequence spans 181 residues: Bifunctional protein PyrR (181 aa).

Residues 100-112 (VVLVDDVIYTGRT) carry the PRPP-binding motif.

Belongs to the purine/pyrimidine phosphoribosyltransferase family. PyrR subfamily. Homodimer and homohexamer; in equilibrium.

It catalyses the reaction UMP + diphosphate = 5-phospho-alpha-D-ribose 1-diphosphate + uracil. Regulates transcriptional attenuation of the pyrimidine nucleotide (pyr) operon by binding in a uridine-dependent manner to specific sites on pyr mRNA. This disrupts an antiterminator hairpin in the RNA and favors formation of a downstream transcription terminator, leading to a reduced expression of downstream genes. Functionally, also displays a weak uracil phosphoribosyltransferase activity which is not physiologically significant. In Pelotomaculum thermopropionicum (strain DSM 13744 / JCM 10971 / SI), this protein is Bifunctional protein PyrR.